Reading from the N-terminus, the 45-residue chain is Thymosin beta-15A homolog (45 aa).

The segment at 19–45 is disordered; the sequence is KKTNTEEKNTLPSKETIEQEKECVKSS. Residues 21–45 are compositionally biased toward basic and acidic residues; it reads TNTEEKNTLPSKETIEQEKECVKSS.

It belongs to the thymosin beta family.

It localises to the cytoplasm. The protein resides in the cytoskeleton. Plays an important role in the organization of the cytoskeleton. Binds to and sequesters actin monomers (G actin) and therefore inhibits actin polymerization. The protein is Thymosin beta-15A homolog of Coturnix japonica (Japanese quail).